The chain runs to 209 residues: Lectin (209 aa).

As to quaternary structure, homodimer; non-covalently linked.

In terms of biological role, binds chito-oligosaccherides. Has hemagglutinating activity towards rabbit erythrocytes. The polypeptide is Lectin (Luffa acutangula (Ridged gourd)).